Here is a 306-residue protein sequence, read N- to C-terminus: 2-phospho-L-lactate transferase (306 aa).

7,8-didemethyl-8-hydroxy-5-deazariboflavin contacts are provided by aspartate 54 and arginine 93.

This sequence belongs to the CofD family. As to quaternary structure, homodimer. It depends on Mg(2+) as a cofactor.

The catalysed reaction is (2S)-lactyl-2-diphospho-5'-guanosine + 7,8-didemethyl-8-hydroxy-5-deazariboflavin = oxidized coenzyme F420-0 + GMP + H(+). The protein operates within cofactor biosynthesis; coenzyme F420 biosynthesis. Catalyzes the transfer of the 2-phospholactate moiety from (2S)-lactyl-2-diphospho-5'-guanosine to 7,8-didemethyl-8-hydroxy-5-deazariboflavin (FO) with the formation of oxidized coenzyme F420-0 and GMP. The chain is 2-phospho-L-lactate transferase from Methanothermobacter thermautotrophicus (strain ATCC 29096 / DSM 1053 / JCM 10044 / NBRC 100330 / Delta H) (Methanobacterium thermoautotrophicum).